A 151-amino-acid chain; its full sequence is Large ribosomal subunit protein uL15 (151 aa).

A disordered region spans residues 1 to 58 (MELNQLKSVPKARNHKTKTLGRGHGSGLGKTSGRGQKGQKARKSGLTRPGFEGGQTPL). Residues 10 to 21 (PKARNHKTKTLG) are compositionally biased toward basic residues. Gly residues predominate over residues 22–36 (RGHGSGLGKTSGRGQ).

The protein belongs to the universal ribosomal protein uL15 family. As to quaternary structure, part of the 50S ribosomal subunit.

Binds to the 23S rRNA. This is Large ribosomal subunit protein uL15 from Mycoplasma pneumoniae (strain ATCC 29342 / M129 / Subtype 1) (Mycoplasmoides pneumoniae).